A 543-amino-acid polypeptide reads, in one-letter code: Formin-binding protein 1-like (543 aa).

Positions 1–263 (MSWGTELWDQ…AAKSVDERRD (263 aa)) constitute an F-BAR domain. Coiled-coil stretches lie at residues 66–258 (FTSC…AKSV) and 334–426 (LEDF…QRSE). The 78-residue stretch at 339–416 (HLPPEQRRKR…IHKNEGWLSE (78 aa)) folds into the REM-1 domain. A disordered region spans residues 424–467 (RSERRHSAEANHLVAQGRESPEGSYTEDANQEGRVQPQHHAHPE). The SH3 domain occupies 479–540 (PAIGHCKSLY…PTSYIEITLE (62 aa)).

The protein belongs to the FNBP1 family. Homodimerizes, the dimers can polymerize end-to-end to form filamentous structures. Interacts with GTP-bound cdc42 and wasl/n-wasp.

It localises to the cytoplasm. The protein resides in the cytoskeleton. Its subcellular location is the cell cortex. The protein localises to the cytoplasmic vesicle. It is found in the cell membrane. Required to coordinate membrane tubulation with reorganization of the actin cytoskeleton during endocytosis. Essential for autophagy of intracellular bacterial pathogens. Promotes cdc42-induced actin polymerization by activating the wasl-waspip complex, the predominant form of wasl/n-wasp in cells. The chain is Formin-binding protein 1-like (fnbp1l) from Xenopus laevis (African clawed frog).